A 254-amino-acid polypeptide reads, in one-letter code: Phosphoglycerate mutase 1 (254 aa).

Residues Arg-10 to Asn-17 and Ser-23 to Gly-24 contribute to the substrate site. His-11 acts as the Tele-phosphohistidine intermediate in catalysis. Ser-14 and Ser-23 each carry phosphoserine. Tyr-26 carries the phosphotyrosine modification. Ser-31 carries the phosphoserine modification. Substrate contacts are provided by residues Arg-62, Glu-89–Tyr-92, and Lys-100. Glu-89 serves as the catalytic Proton donor/acceptor. Lys-106 bears the N6-acetyllysine mark. Arg-116–Arg-117 contacts substrate. Phosphoserine is present on Ser-118. Residue Gly-187–Asn-188 participates in substrate binding. Lys-251 is modified (N6-acetyllysine; alternate). Lys-251 carries the N6-succinyllysine; alternate modification. An N6-acetyllysine mark is found at Lys-253 and Lys-254.

The protein belongs to the phosphoglycerate mutase family. BPG-dependent PGAM subfamily. In terms of assembly, homodimer. In terms of processing, acetylated at Lys-253, Lys-253 and Lys-254 under high glucose condition. Acetylation increases catalytic activity. Under glucose restriction SIRT1 levels dramatically increase and it deacetylates the enzyme.

It carries out the reaction (2R)-2-phosphoglycerate = (2R)-3-phosphoglycerate. The enzyme catalyses (2R)-3-phospho-glyceroyl phosphate = (2R)-2,3-bisphosphoglycerate + H(+). Its function is as follows. Catalyzes the interconversion of 2-phosphoglycerate and 3-phosphoglyceratea crucial step in glycolysis, by using 2,3-bisphosphoglycerate. Also catalyzes the interconversion of (2R)-2,3-bisphosphoglycerate and (2R)-3-phospho-glyceroyl phosphate. The sequence is that of Phosphoglycerate mutase 1 from Bos taurus (Bovine).